The sequence spans 161 residues: Large ribosomal subunit protein uL10 (161 aa).

The protein belongs to the universal ribosomal protein uL10 family. Part of the ribosomal stalk of the 50S ribosomal subunit. The N-terminus interacts with L11 and the large rRNA to form the base of the stalk. The C-terminus forms an elongated spine to which L12 dimers bind in a sequential fashion forming a multimeric L10(L12)X complex.

Forms part of the ribosomal stalk, playing a central role in the interaction of the ribosome with GTP-bound translation factors. This Campylobacter curvus (strain 525.92) protein is Large ribosomal subunit protein uL10.